We begin with the raw amino-acid sequence, 635 residues long: Chaperone protein HtpG (635 aa).

The a; substrate-binding stretch occupies residues 1 to 346 (MSQTTTTSAS…SADLPLNVSR (346 aa)). Residues 347-563 (EILQESRDVR…QNELSPHLLR (217 aa)) are b. Positions 564-635 (MLKAAGQEAP…KRLNGLLLKA (72 aa)) are c.

Belongs to the heat shock protein 90 family. As to quaternary structure, homodimer.

It is found in the cytoplasm. In terms of biological role, molecular chaperone. Has ATPase activity. The chain is Chaperone protein HtpG from Bordetella pertussis (strain Tohama I / ATCC BAA-589 / NCTC 13251).